The sequence spans 510 residues: MITLDRPTLTARALEDLTASALVVGVGTGPDGPVLLTDALPAEAATALEASFELLGVRGAEDEVHRLPGLGGVPVPLLVLAGVGGLDDDGEASDESLRRAAGAAVRSLAGTDAVALALPADTPARLAAVAEGAVLGAYAFTAQKSECARAEADSSRPVRELEVVTPLAAADADPVLRRAAVVGDAVCAVRDLVNTAPSHLYPATFADAVAEDLADSPVSVDVWDEDRLRAEGFGGILAIGQGSSRPPRLVRIEHAPADAAAHIALVGKGITFDTGGISLKPAASMMTMKSDMAGAATVFAVVRAAAALDVPVKVTGWLALAENMPSGTAIRPSDVITMYGGKTVEVMNTDAEGRVVMADALVAATNEHPDAVLDVATLTGAQLVALGVRHTGVMGDDALRDEAVAAADAAGELAWGMPLPEQLRASLTSRVADISNMGDRFGGMMTAATFLREFVDAGRPQDDDAARTPWAHLDIAGPSFNESAAYGYTPQDATGVMVRTLVGLIEGRAR.

2 residues coordinate Mn(2+): Lys268 and Asp273. Lys280 is an active-site residue. 3 residues coordinate Mn(2+): Asp291, Asp350, and Glu352. Arg354 is a catalytic residue.

The protein belongs to the peptidase M17 family. The cofactor is Mn(2+).

It localises to the cytoplasm. It carries out the reaction Release of an N-terminal amino acid, Xaa-|-Yaa-, in which Xaa is preferably Leu, but may be other amino acids including Pro although not Arg or Lys, and Yaa may be Pro. Amino acid amides and methyl esters are also readily hydrolyzed, but rates on arylamides are exceedingly low.. The catalysed reaction is Release of an N-terminal amino acid, preferentially leucine, but not glutamic or aspartic acids.. Functionally, presumably involved in the processing and regular turnover of intracellular proteins. Catalyzes the removal of unsubstituted N-terminal amino acids from various peptides. This Micrococcus luteus (strain ATCC 4698 / DSM 20030 / JCM 1464 / CCM 169 / CCUG 5858 / IAM 1056 / NBRC 3333 / NCIMB 9278 / NCTC 2665 / VKM Ac-2230) (Micrococcus lysodeikticus) protein is Probable cytosol aminopeptidase.